A 101-amino-acid chain; its full sequence is NAD(P)H-quinone oxidoreductase subunit 4L, chloroplastic (101 aa).

3 consecutive transmembrane segments (helical) span residues 2 to 22 (MLEH…YGLI), 32 to 52 (MCLE…SDFF), and 61 to 81 (IFSI…PAIV).

This sequence belongs to the complex I subunit 4L family. As to quaternary structure, NDH is composed of at least 16 different subunits, 5 of which are encoded in the nucleus.

The protein localises to the plastid. The protein resides in the chloroplast thylakoid membrane. The enzyme catalyses a plastoquinone + NADH + (n+1) H(+)(in) = a plastoquinol + NAD(+) + n H(+)(out). It catalyses the reaction a plastoquinone + NADPH + (n+1) H(+)(in) = a plastoquinol + NADP(+) + n H(+)(out). In terms of biological role, NDH shuttles electrons from NAD(P)H:plastoquinone, via FMN and iron-sulfur (Fe-S) centers, to quinones in the photosynthetic chain and possibly in a chloroplast respiratory chain. The immediate electron acceptor for the enzyme in this species is believed to be plastoquinone. Couples the redox reaction to proton translocation, and thus conserves the redox energy in a proton gradient. This Fagopyrum esculentum subsp. ancestrale (Wild buckwheat) protein is NAD(P)H-quinone oxidoreductase subunit 4L, chloroplastic.